The following is an 833-amino-acid chain: Kinesin-like protein KIFC3 (833 aa).

A disordered region spans residues 19-74 (LWRVGRAPEPEPGMARPAPAPASPAARPFPHTGPGRLRTGRGKDTPVCGDEDSSAR). The span at 30–48 (PGMARPAPAPASPAARPFP) shows a compositional bias: low complexity. 2 coiled-coil regions span residues 102 to 362 (LTLQ…ENLA) and 395 to 432 (LLQE…LQLR). Residues 445–768 (NIRVIARVRP…LKFAERVRSV (324 aa)) form the Kinesin motor domain. Residue 528–535 (GQTGAGKT) coordinates ATP. Residues 786–833 (EHLEWEPACQTPQPSARAHSAPSSGTSSRPGSIRRKLQPSGKSRPLPV) are disordered. Residues 806-815 (APSSGTSSRP) are compositionally biased toward polar residues. Phosphoserine occurs at positions 813 and 817.

It belongs to the TRAFAC class myosin-kinesin ATPase superfamily. Kinesin family.

The protein localises to the cell junction. It is found in the adherens junction. The protein resides in the cytoplasm. Its subcellular location is the cytoskeleton. It localises to the microtubule organizing center. The protein localises to the centrosome. It is found in the cytoplasmic vesicle membrane. In terms of biological role, minus-end microtubule-dependent motor protein. Involved in apically targeted transport. Required for zonula adherens maintenance. The sequence is that of Kinesin-like protein KIFC3 (KIFC3) from Homo sapiens (Human).